A 116-amino-acid chain; its full sequence is Small ribosomal subunit protein uS8c (116 aa).

This sequence belongs to the universal ribosomal protein uS8 family. Part of the 30S ribosomal subunit.

The protein resides in the plastid. The protein localises to the chloroplast. Its function is as follows. One of the primary rRNA binding proteins, it binds directly to 16S rRNA central domain where it helps coordinate assembly of the platform of the 30S subunit. The sequence is that of Small ribosomal subunit protein uS8c (rps8) from Musa acuminata (Banana).